Here is a 468-residue protein sequence, read N- to C-terminus: Histone acetyltransferase type B catalytic subunit (468 aa).

Ser8 is subject to Phosphoserine. 2 interaction with histone H4 N-terminus regions span residues Glu44–Glu46 and Tyr208–Phe210. Acetyl-CoA-binding positions include Phe248–Ile250 and Gln255–Ser261. Glu283 serves as the catalytic Proton donor/acceptor. A disordered region spans residues Ser442 to Ala468.

Belongs to the HAT1 family. As to quaternary structure, component of the HAT-B complex composed of at least HAT1 and HAT2. The HAT-B complex binds to histone H4 tail. In the nucleus, interacts with GSK1 and SSB1. In the cytoplasm, interacts with ATG3 and ATG9. In terms of processing, phosphorylated at Ser-8 by GSK1 in the nucleus which impairs its translocation to the cytoplasm through interfering the interaction between HAT1 and SSB1. Dephosphorylation under nutrient starvation conditions promotes the interaction between HAT1 and SSB1 and results in the translocation of HAT1 from the nucleus to the cytoplasm in order to acetylate ATG3 and ATG9.

Its subcellular location is the nucleus. It localises to the cytoplasm. It is found in the preautophagosomal structure. It carries out the reaction L-lysyl-[protein] + acetyl-CoA = N(6)-acetyl-L-lysyl-[protein] + CoA + H(+). In terms of biological role, catalytic component of the histone acetylase B (HAT-B) complex. Has intrinsic substrate specificity that modifies lysine in recognition sequence GXGKXG. Involved in DNA double-strand break repair. Required for appressorium turgor pressure, autophagy and conidial nuclear degradation. During the germination process and upon starvation conditions, translocates from the nucleus to the cytoplasm where it acetylates ATG3 at 'lys-262' and 'Lys-267', thus influencing autophagy through controlling ATG3-ATG8 interaction. Also acetylates ATG9 at 'Lys-621' to regulate ATG9 binding to vesicles, which is also important for autophagy and pathogenicity. In Pyricularia oryzae (strain 70-15 / ATCC MYA-4617 / FGSC 8958) (Rice blast fungus), this protein is Histone acetyltransferase type B catalytic subunit.